Reading from the N-terminus, the 249-residue chain is Phosphate import ATP-binding protein PstB (249 aa).

In terms of domain architecture, ABC transporter spans 4–244 (VKIKDLSLFY…PQDKRTEDYI (241 aa)). An ATP-binding site is contributed by 36-43 (GPSGCGKS).

This sequence belongs to the ABC transporter superfamily. Phosphate importer (TC 3.A.1.7) family. In terms of assembly, the complex is composed of two ATP-binding proteins (PstB), two transmembrane proteins (PstC and PstA) and a solute-binding protein (PstS).

Its subcellular location is the cell membrane. The catalysed reaction is phosphate(out) + ATP + H2O = ADP + 2 phosphate(in) + H(+). Functionally, part of the ABC transporter complex PstSACB involved in phosphate import. Responsible for energy coupling to the transport system. In Clostridium tetani (strain Massachusetts / E88), this protein is Phosphate import ATP-binding protein PstB.